A 239-amino-acid chain; its full sequence is tRNA1(Val) (adenine(37)-N6)-methyltransferase (239 aa).

This sequence belongs to the methyltransferase superfamily. tRNA (adenine-N(6)-)-methyltransferase family.

The protein localises to the cytoplasm. It catalyses the reaction adenosine(37) in tRNA1(Val) + S-adenosyl-L-methionine = N(6)-methyladenosine(37) in tRNA1(Val) + S-adenosyl-L-homocysteine + H(+). Its function is as follows. Specifically methylates the adenine in position 37 of tRNA(1)(Val) (anticodon cmo5UAC). The protein is tRNA1(Val) (adenine(37)-N6)-methyltransferase of Trichodesmium erythraeum (strain IMS101).